Consider the following 427-residue polypeptide: 3-phosphoshikimate 1-carboxyvinyltransferase (427 aa).

Positions 22, 23, and 27 each coordinate 3-phosphoshikimate. Phosphoenolpyruvate is bound at residue Lys-22. Phosphoenolpyruvate contacts are provided by Gly-96 and Arg-124. 3-phosphoshikimate is bound by residues Ser-169, Ser-170, Gln-171, Ser-197, Asp-313, Asn-336, and Lys-340. Gln-171 is a phosphoenolpyruvate binding site. Asp-313 serves as the catalytic Proton acceptor. Residues Arg-344, Arg-386, and Lys-411 each contribute to the phosphoenolpyruvate site.

This sequence belongs to the EPSP synthase family. Monomer.

The protein localises to the cytoplasm. The enzyme catalyses 3-phosphoshikimate + phosphoenolpyruvate = 5-O-(1-carboxyvinyl)-3-phosphoshikimate + phosphate. It participates in metabolic intermediate biosynthesis; chorismate biosynthesis; chorismate from D-erythrose 4-phosphate and phosphoenolpyruvate: step 6/7. Functionally, catalyzes the transfer of the enolpyruvyl moiety of phosphoenolpyruvate (PEP) to the 5-hydroxyl of shikimate-3-phosphate (S3P) to produce enolpyruvyl shikimate-3-phosphate and inorganic phosphate. This is 3-phosphoshikimate 1-carboxyvinyltransferase from Salmonella newport (strain SL254).